We begin with the raw amino-acid sequence, 811 residues long: Protein kinase C-binding protein NELL2a (811 aa).

Residues 1–18 (MAFLQLFVGLLCGAAVSA) form the signal peptide. Residues 54-225 (AFMFQGSSRS…TQCPDLNRTC (172 aa)) enclose the Laminin G-like domain. Asn222, Asn290, and Asn295 each carry an N-linked (GlcNAc...) asparagine glycan. The VWFC 1 domain occupies 269–328 (RTCRVKDQIYREEQSWTDGCKNCTCSNGTVRCEKILCPPLDCPDGTTPAYVTGTCCKECQ). The region spanning 395–437 (GHDFCAEENICSENSDCVNLDAGASCGCKNGFRPLRLDSAYCE) is the EGF-like 1 domain. Cystine bridges form between Cys399-Cys411, Cys405-Cys420, and Cys422-Cys436. Ca(2+) contacts are provided by Asp438, Ile439, and Glu441. One can recognise an EGF-like 2; calcium-binding domain in the interval 438–479 (DIDECAEGRHYCRENTECVNTAGSFMCVCHTGFIRIDDYSCT). 9 disulfide bridges follow: Cys442-Cys455, Cys449-Cys464, Cys466-Cys478, Cys484-Cys497, Cys491-Cys506, Cys508-Cys519, Cys523-Cys533, Cys527-Cys539, and Cys541-Cys550. Ca(2+)-binding residues include Asn457, Thr458, and Ser461. Residues 480–520 (EHDECASGQHDCDENALCFNTVGGHSCSCKPGYSGNGTVCR) form the EGF-like 3; calcium-binding domain. N-linked (GlcNAc...) asparagine glycosylation occurs at Asn515. The 31-residue stretch at 521–551 (ALCDGRCLNGGSCASPNVCVCVQGFSGQNCE) folds into the EGF-like 4 domain. Asp553, Ile554, and Glu556 together coordinate Ca(2+). Residues 553-592 (DIDECSEGLVQCAAHATCVNLPGWYHCECRDGYHDNEVFS) form the EGF-like 5; calcium-binding domain. Cystine bridges form between Cys557/Cys570, Cys564/Cys579, and Cys581/Cys598. The Ca(2+) site is built by Asn572, Leu573, and Trp576. Ca(2+)-binding residues include Asp600, Ile601, and Glu603. Residues 600–635 (DIDECRTGRSTCANDTVCFNLDGGFDCRCPHGHNCS) enclose the EGF-like 6; calcium-binding domain. Cystine bridges form between Cys604–Cys617, Cys611–Cys626, and Cys628–Cys634. N-linked (GlcNAc...) asparagine glycosylation is present at Asn613. 3 residues coordinate Ca(2+): Asn619, Leu620, and Gly623. N-linked (GlcNAc...) asparagine glycosylation is present at Asn633. 2 consecutive VWFC domains span residues 636–691 (GDCI…PECD) and 696–754 (SQCL…PRCV).

As to quaternary structure, homotrimer.

The protein localises to the secreted. Its function is as follows. May regulate neuronal differentiation, polarization and axon guidance. This chain is Protein kinase C-binding protein NELL2a (nell2a), found in Danio rerio (Zebrafish).